Here is a 269-residue protein sequence, read N- to C-terminus: Ribosomal RNA small subunit methyltransferase A (269 aa).

Residues Asn-18, Leu-20, Gly-45, Glu-66, Asp-91, and Asn-112 each coordinate S-adenosyl-L-methionine.

This sequence belongs to the class I-like SAM-binding methyltransferase superfamily. rRNA adenine N(6)-methyltransferase family. RsmA subfamily.

The protein localises to the cytoplasm. The catalysed reaction is adenosine(1518)/adenosine(1519) in 16S rRNA + 4 S-adenosyl-L-methionine = N(6)-dimethyladenosine(1518)/N(6)-dimethyladenosine(1519) in 16S rRNA + 4 S-adenosyl-L-homocysteine + 4 H(+). Its function is as follows. Specifically dimethylates two adjacent adenosines (A1518 and A1519) in the loop of a conserved hairpin near the 3'-end of 16S rRNA in the 30S particle. May play a critical role in biogenesis of 30S subunits. The chain is Ribosomal RNA small subunit methyltransferase A from Vibrio parahaemolyticus serotype O3:K6 (strain RIMD 2210633).